Consider the following 92-residue polypeptide: Small ribosomal subunit protein bS18 (92 aa).

Residues 1 to 28 (MTQQGNSGERKPRGKGPKRPRKPKVDPF) form a disordered region. A compositionally biased stretch (basic residues) spans 12-22 (PRGKGPKRPRK).

Belongs to the bacterial ribosomal protein bS18 family. As to quaternary structure, part of the 30S ribosomal subunit. Forms a tight heterodimer with protein bS6.

Its function is as follows. Binds as a heterodimer with protein bS6 to the central domain of the 16S rRNA, where it helps stabilize the platform of the 30S subunit. The polypeptide is Small ribosomal subunit protein bS18 (Deinococcus radiodurans (strain ATCC 13939 / DSM 20539 / JCM 16871 / CCUG 27074 / LMG 4051 / NBRC 15346 / NCIMB 9279 / VKM B-1422 / R1)).